Consider the following 782-residue polypeptide: Chaoptin (782 aa).

LRR repeat units follow at residues 16-37, 43-64, 67-88, 93-114, 117-138, 141-162, 165-186, 191-212, 224-245, 249-270, 273-294, 297-318, 321-342, 344-364, 370-391, 395-416, 419-442, 446-467, 468-488, 491-512, 514-535, and 539-560; these read SLLT…PSDA, RLEE…SFHF, SLKK…TFQG, DLTE…TFAD, QLEQ…AFMN, SLKR…TFQN, ELED…IFDQ, GMFH…PSVP, NIKV…FFRP, SLMQ…LFGN, HLQV…TFRN, KLQW…LFRF, NLRI…LFRE, GLER…TSLS, TLSE…GQLA, CLSW…TFKG, RLAS…SFQG, TLLH…STPN, LLSL…VAGN, SLRY…THSL, ELRH…SLLG, and QLEE…AFCK. N-linked (GlcNAc...) asparagine glycans are attached at residues Asn196, Asn234, and Asn262. Residues Asn454 and Asn488 are each glycosylated (N-linked (GlcNAc...) asparagine). Asn530 is a glycosylation site (N-linked (GlcNAc...) asparagine). Asn618, Asn648, and Asn667 each carry an N-linked (GlcNAc...) asparagine glycan.

This sequence belongs to the chaoptin family.

Its subcellular location is the cell membrane. Required for photoreceptor cell morphogenesis. Mediates homophilic cellular adhesion. The polypeptide is Chaoptin (CHP) (Tribolium castaneum (Red flour beetle)).